The sequence spans 335 residues: Holliday junction branch migration complex subunit RuvB (335 aa).

The segment at 1 to 183 is large ATPase domain (RuvB-L); sequence MDERIISSET…FGVIDHLEFY (183 aa). ATP is bound by residues L22, R23, G64, K67, T68, T69, 130–132, R173, Y183, and R220; that span reads EDY. Residue T68 participates in Mg(2+) binding. Positions 184–254 are small ATPAse domain (RuvB-S); the sequence is TEEQLTEIVL…LAKEALTLLQ (71 aa). The tract at residues 257–335 is head domain (RuvB-H); it reads PRGLDTIDQK…HLGISYEKEV (79 aa). DNA is bound by residues R293, R312, and R317.

It belongs to the RuvB family. In terms of assembly, homohexamer. Forms an RuvA(8)-RuvB(12)-Holliday junction (HJ) complex. HJ DNA is sandwiched between 2 RuvA tetramers; dsDNA enters through RuvA and exits via RuvB. An RuvB hexamer assembles on each DNA strand where it exits the tetramer. Each RuvB hexamer is contacted by two RuvA subunits (via domain III) on 2 adjacent RuvB subunits; this complex drives branch migration. In the full resolvosome a probable DNA-RuvA(4)-RuvB(12)-RuvC(2) complex forms which resolves the HJ.

It localises to the cytoplasm. It carries out the reaction ATP + H2O = ADP + phosphate + H(+). Its function is as follows. The RuvA-RuvB-RuvC complex processes Holliday junction (HJ) DNA during genetic recombination and DNA repair, while the RuvA-RuvB complex plays an important role in the rescue of blocked DNA replication forks via replication fork reversal (RFR). RuvA specifically binds to HJ cruciform DNA, conferring on it an open structure. The RuvB hexamer acts as an ATP-dependent pump, pulling dsDNA into and through the RuvAB complex. RuvB forms 2 homohexamers on either side of HJ DNA bound by 1 or 2 RuvA tetramers; 4 subunits per hexamer contact DNA at a time. Coordinated motions by a converter formed by DNA-disengaged RuvB subunits stimulates ATP hydrolysis and nucleotide exchange. Immobilization of the converter enables RuvB to convert the ATP-contained energy into a lever motion, pulling 2 nucleotides of DNA out of the RuvA tetramer per ATP hydrolyzed, thus driving DNA branch migration. The RuvB motors rotate together with the DNA substrate, which together with the progressing nucleotide cycle form the mechanistic basis for DNA recombination by continuous HJ branch migration. Branch migration allows RuvC to scan DNA until it finds its consensus sequence, where it cleaves and resolves cruciform DNA. The chain is Holliday junction branch migration complex subunit RuvB from Listeria monocytogenes serovar 1/2a (strain ATCC BAA-679 / EGD-e).